A 1356-amino-acid chain; its full sequence is DNA-directed RNA polymerase subunit beta (1356 aa).

The protein belongs to the RNA polymerase beta chain family. As to quaternary structure, the RNAP catalytic core consists of 2 alpha, 1 beta, 1 beta' and 1 omega subunit. When a sigma factor is associated with the core the holoenzyme is formed, which can initiate transcription.

The catalysed reaction is RNA(n) + a ribonucleoside 5'-triphosphate = RNA(n+1) + diphosphate. DNA-dependent RNA polymerase catalyzes the transcription of DNA into RNA using the four ribonucleoside triphosphates as substrates. The polypeptide is DNA-directed RNA polymerase subunit beta (Stutzerimonas stutzeri (strain A1501) (Pseudomonas stutzeri)).